A 620-amino-acid chain; its full sequence is UvrABC system protein C (620 aa).

The 80-residue stretch at 13 to 92 (DKPGVYIMKN…IKKYSPRYNI (80 aa)) folds into the GIY-YIG domain. The UVR domain occupies 204 to 239 (TSIIKKLKLEMEKAAEELEFEKAAKIRDRILAIELI).

Belongs to the UvrC family. Interacts with UvrB in an incision complex.

It localises to the cytoplasm. In terms of biological role, the UvrABC repair system catalyzes the recognition and processing of DNA lesions. UvrC both incises the 5' and 3' sides of the lesion. The N-terminal half is responsible for the 3' incision and the C-terminal half is responsible for the 5' incision. In Clostridium perfringens (strain 13 / Type A), this protein is UvrABC system protein C.